Reading from the N-terminus, the 173-residue chain is GTP-dependent dephospho-CoA kinase (173 aa).

6 residues coordinate GTP: Asp-52, Val-53, Val-54, Asp-71, Lys-73, and Asp-122.

The protein belongs to the GTP-dependent DPCK family.

It catalyses the reaction 3'-dephospho-CoA + GTP = GDP + CoA + H(+). The protein operates within cofactor biosynthesis; coenzyme A biosynthesis. Its function is as follows. Catalyzes the GTP-dependent phosphorylation of the 3'-hydroxyl group of dephosphocoenzyme A to form coenzyme A (CoA). The polypeptide is GTP-dependent dephospho-CoA kinase (Metallosphaera sedula (strain ATCC 51363 / DSM 5348 / JCM 9185 / NBRC 15509 / TH2)).